A 517-amino-acid chain; its full sequence is uncharacterized protein (517 aa).

Disordered regions lie at residues 16–148 (KDES…TITK), 156–175 (VNKE…NTTT), and 216–351 (KLEK…EENE). Positions 48-75 (NNNNNNNNTTTTNNNTNNSNTSTSNNSK) are enriched in low complexity. Residues 84–112 (FDDDDDDGDEEDEEEEDDDDDDDDDDDET) show a composition bias toward acidic residues. Residues 127–143 (QPQPQPQPQPQPQPPIK) show a composition bias toward pro residues. Over residues 236 to 252 (VSSTLSNSFDPNIIHNQ) the composition is skewed to polar residues. The span at 254–266 (SPPPPPISIPIPL) shows a compositional bias: pro residues. 2 stretches are compositionally biased toward low complexity: residues 271-320 (NLNN…NSNI) and 327-347 (SSSM…SNNN). Residues 340–452 (DNSSSNNNEE…HQNQQNSMNN (113 aa)) adopt a coiled-coil conformation.

This sequence belongs to the ENTR1 family.

This is an uncharacterized protein from Dictyostelium discoideum (Social amoeba).